Reading from the N-terminus, the 410-residue chain is Putative F-box/kelch-repeat protein At1g15680 (410 aa).

The region spanning 13–58 (CKRRIELPEELLAEIVARLPFISITRFKSVCKGWRSLIESTYFRHL) is the F-box domain. Kelch repeat units lie at residues 177–227 (VVCM…SLKK) and 274–327 (AYTT…YFPV).

The polypeptide is Putative F-box/kelch-repeat protein At1g15680 (Arabidopsis thaliana (Mouse-ear cress)).